Here is a 1761-residue protein sequence, read N- to C-terminus: Lysine-specific demethylase 3B (1761 aa).

An N-acetylalanine modification is found at Ala2. Residues 253-346 (DNSAPQSEGG…QRAKQPPSTF (94 aa)) form a disordered region. Residues 298–309 (ASKKLKGDRGEV) are compositionally biased toward basic and acidic residues. Position 361 is an N6-acetyllysine (Lys361). Disordered stretches follow at residues 370–394 (QDEP…QTPL) and 438–496 (DTGL…NGVL). Polar residues-rich tracts occupy residues 380–392 (ASFT…TGQT), 453–468 (SRSQ…SILA), and 477–495 (PSSS…SNGV). A phosphoserine mark is found at Ser492, Ser546, Ser556, and Ser560. Positions 572–603 (RSVLGTDTKPGSKAGSSVDRKVPAESMPTLTP) are disordered. Thr614 is subject to Phosphothreonine. Positions 714–762 (GPSLSAMGNGRSSSPTSSLTQPIEMPTLSSSPTEERPTVGPGQQDNPLL) are disordered. Residues 723-745 (GRSSSPTSSLTQPIEMPTLSSSP) are compositionally biased toward polar residues. Ser766, Ser773, Ser778, and Ser779 each carry phosphoserine. Residue Lys788 forms a Glycyl lysine isopeptide (Lys-Gly) (interchain with G-Cter in SUMO2) linkage. Ser798 bears the Phosphoserine mark. Residues 805–827 (ACRQDSDSSTNSDLSDLSDSEEQ) form a disordered region. The segment at 1031-1056 (CDVCETTLFNIHWVCRKCGFGVCLDC) adopts a C6-type zinc-finger fold. Residues 1142–1161 (GMSQLPSINPSASSGNETTF) are compositionally biased toward polar residues. The segment at 1142 to 1220 (GMSQLPSINP…PCPDTAPPSS (79 aa)) is disordered. Positions 1174-1193 (EPDHVPKADSTDIRSEEPLK) are enriched in basic and acidic residues. Residues 1194–1204 (TDSSASNSNSE) show a composition bias toward polar residues. Residues Ser1253 and Ser1259 each carry the phosphoserine modification. The LXXLL motif motif lies at 1293–1297 (LRDLL). Residues 1498–1721 (MPTRFEDLME…HCFRLTQEFR (224 aa)) form the JmjC domain. Residues His1560, Asp1562, and His1689 each coordinate Fe cation.

The protein belongs to the JHDM2 histone demethylase family. Requires Fe(2+) as cofactor. As to expression, ubiquitous. Highly expressed in placenta, skeletal muscle, kidney, heart and liver.

It localises to the nucleus. It catalyses the reaction N(6),N(6)-dimethyl-L-lysyl(9)-[histone H3] + 2 2-oxoglutarate + 2 O2 = L-lysyl(9)-[histone H3] + 2 formaldehyde + 2 succinate + 2 CO2. Histone demethylase that specifically demethylates 'Lys-9' of histone H3, thereby playing a central role in histone code. Demethylation of Lys residue generates formaldehyde and succinate. May have tumor suppressor activity. This is Lysine-specific demethylase 3B (KDM3B) from Homo sapiens (Human).